Consider the following 462-residue polypeptide: tRNA(Ile)-lysidine synthase (462 aa).

An ATP-binding site is contributed by 26–31; it reads SGGVDS.

The protein belongs to the tRNA(Ile)-lysidine synthase family.

The protein resides in the cytoplasm. It catalyses the reaction cytidine(34) in tRNA(Ile2) + L-lysine + ATP = lysidine(34) in tRNA(Ile2) + AMP + diphosphate + H(+). In terms of biological role, ligates lysine onto the cytidine present at position 34 of the AUA codon-specific tRNA(Ile) that contains the anticodon CAU, in an ATP-dependent manner. Cytidine is converted to lysidine, thus changing the amino acid specificity of the tRNA from methionine to isoleucine. This chain is tRNA(Ile)-lysidine synthase, found in Enterococcus faecalis (strain ATCC 700802 / V583).